The primary structure comprises 350 residues: Quinone oxidoreductase-like protein 2 (350 aa).

K36 carries the post-translational modification N6-acetyllysine. K201 carries the N6-succinyllysine modification. Residues K302 and K328 each carry the N6-acetyllysine modification.

The protein belongs to the zinc-containing alcohol dehydrogenase family. Quinone oxidoreductase subfamily.

The protein is Quinone oxidoreductase-like protein 2 of Mus musculus (Mouse).